The following is a 66-amino-acid chain: ATP synthase F(0) complex subunit 8 (66 aa).

A helical membrane pass occupies residues 8-24 (IWLLAVVIVLTTLMIFL). Lysine 54 carries the post-translational modification N6-acetyllysine; alternate. Lysine 54 bears the N6-succinyllysine; alternate mark. N6-acetyllysine is present on lysine 57.

The protein belongs to the ATPase protein 8 family. As to quaternary structure, component of the ATP synthase complex composed at least of ATP5F1A/subunit alpha, ATP5F1B/subunit beta, ATP5MC1/subunit c (homooctomer), MT-ATP6/subunit a, MT-ATP8/subunit 8, ATP5ME/subunit e, ATP5MF/subunit f, ATP5MG/subunit g, ATP5MK/subunit k, ATP5MJ/subunit j, ATP5F1C/subunit gamma, ATP5F1D/subunit delta, ATP5F1E/subunit epsilon, ATP5PF/subunit F6, ATP5PB/subunit b, ATP5PD/subunit d, ATP5PO/subunit OSCP. ATP synthase complex consists of a soluble F(1) head domain (subunits alpha(3) and beta(3)) - the catalytic core - and a membrane F(0) domain - the membrane proton channel (subunits c, a, 8, e, f, g, k and j). These two domains are linked by a central stalk (subunits gamma, delta, and epsilon) rotating inside the F1 region and a stationary peripheral stalk (subunits F6, b, d, and OSCP). Interacts with PRICKLE3.

It localises to the mitochondrion membrane. Its function is as follows. Subunit 8, of the mitochondrial membrane ATP synthase complex (F(1)F(0) ATP synthase or Complex V) that produces ATP from ADP in the presence of a proton gradient across the membrane which is generated by electron transport complexes of the respiratory chain. ATP synthase complex consist of a soluble F(1) head domain - the catalytic core - and a membrane F(1) domain - the membrane proton channel. These two domains are linked by a central stalk rotating inside the F(1) region and a stationary peripheral stalk. During catalysis, ATP synthesis in the catalytic domain of F(1) is coupled via a rotary mechanism of the central stalk subunits to proton translocation. In vivo, can only synthesize ATP although its ATP hydrolase activity can be activated artificially in vitro. Part of the complex F(0) domain. The sequence is that of ATP synthase F(0) complex subunit 8 from Loxodonta africana (African elephant).